A 501-amino-acid polypeptide reads, in one-letter code: Fumarate reductase 2 (501 aa).

The N-terminal 32 residues, 1 to 32, are a transit peptide targeting the mitochondrion; it reads MIRSVRRVFIYVSIFVLIIVLKRTLSGTDQTS. 37–51 contacts FAD; that stretch reads VVVIGSGLAGLTTSN. Catalysis depends on residues His281 and Arg304.

The protein belongs to the FAD-dependent oxidoreductase 2 family. FRD/SDH subfamily. FAD is required as a cofactor.

Its subcellular location is the mitochondrion. The catalysed reaction is succinate + NAD(+) = fumarate + NADH + H(+). Functionally, irreversibly catalyzes the reduction of fumarate to succinate. Together with the second isozyme of soluble fumarate reductase (FRD1), essential for anaerobic growth. Involved in maintaining redox balance during oxygen deficiency conditions. Reduction of fumarate is the main source of succinate during fermentation, and under anaerobic conditions, the formation of succinate is strictly required for the reoxidation of FADH(2). In Saccharomyces cerevisiae (strain ATCC 204508 / S288c) (Baker's yeast), this protein is Fumarate reductase 2 (OSM1).